The chain runs to 349 residues: Dihydroorotate dehydrogenase (quinone) (349 aa).

FMN-binding positions include 67 to 71 (AGLDK) and T91. K71 contacts substrate. A substrate-binding site is contributed by 116-120 (NRLGF). 2 residues coordinate FMN: N147 and N180. Substrate is bound at residue N180. S183 serves as the catalytic Nucleophile. Residue N185 coordinates substrate. K225 and T253 together coordinate FMN. 254–255 (NT) lines the substrate pocket. FMN is bound by residues G276, G305, and 326-327 (YT).

The protein belongs to the dihydroorotate dehydrogenase family. Type 2 subfamily. Monomer. It depends on FMN as a cofactor.

The protein resides in the cell membrane. The enzyme catalyses (S)-dihydroorotate + a quinone = orotate + a quinol. The protein operates within pyrimidine metabolism; UMP biosynthesis via de novo pathway; orotate from (S)-dihydroorotate (quinone route): step 1/1. Its function is as follows. Catalyzes the conversion of dihydroorotate to orotate with quinone as electron acceptor. In Bordetella pertussis (strain Tohama I / ATCC BAA-589 / NCTC 13251), this protein is Dihydroorotate dehydrogenase (quinone).